A 4451-amino-acid polypeptide reads, in one-letter code: Gramicidin S synthase 2 (4451 aa).

A domain 1 (proline-activating) region spans residues 467–1044 (DKTIHQLFTE…IQEISNYING (578 aa)). 4 consecutive Carrier domains span residues 971–1046 (VPTN…NGAK), 2006–2081 (APSS…ADGQ), 3052–3127 (RPRT…EETD), and 4090–4165 (APRN…THQE). Serine 1006, serine 2041, serine 3087, and serine 4125 each carry O-(pantetheine 4'-phosphoryl)serine. Positions 1521–2080 (DHVAVGWKDQ…SALAQYIADG (560 aa)) are domain 2 (valine-activating). Positions 2538–3135 (YATNKIFHEL…TDTEQYMAIQ (598 aa)) are domain 3 (ornithine-activating). The domain 4 (leucine-activating) stretch occupies residues 3591–4173 (IQELFEEQVK…QESENNVHQP (583 aa)).

Belongs to the ATP-dependent AMP-binding enzyme family. As to quaternary structure, large multienzyme complex of GrsA and GrsB. Requires pantetheine 4'-phosphate as cofactor.

Its pathway is antibiotic biosynthesis; gramicidin S biosynthesis. In terms of biological role, this protein is a multifunctional enzyme, able to activate and polymerize the amino acids Pro, Val, Orn and Leu. Activation sites for these AA consist of individual domains. The protein is Gramicidin S synthase 2 (grsB) of Aneurinibacillus migulanus (Bacillus migulanus).